The following is a 218-amino-acid chain: MATRSPSVVISDDEPGYDLDLFCIPNHYAEDLEKVFIPHGLIMDRTERLARDVMKEMGGHHIVALCVLKGGYKFFADLLDYIKALNRNSDRSIPMTVDFIRLKSYCNDQSTGDIKVIGGDDLSTLTGKNVLIVEDIIDTGKTMQTLLSLVKQHNPKMVKVASLLVKRTPRSVGYRPDFVGFEIPDKFVVGYALDYNEYFRDLNHVCVISETGKAKYKA.

An N-acetylalanine modification is found at A2. Residue K69 coordinates GMP. An N6-acetyllysine modification is found at K103. Residue K115 forms a Glycyl lysine isopeptide (Lys-Gly) (interchain with G-Cter in SUMO1); alternate linkage. K115 is covalently cross-linked (Glycyl lysine isopeptide (Lys-Gly) (interchain with G-Cter in SUMO2); alternate). GMP contacts are provided by residues 134 to 142, K166, 186 to 188, and D194; these read EDIIDTGKT and KFV. The active-site Proton acceptor is D138. A Phosphothreonine modification is found at T142. D194 provides a ligand contact to Mg(2+).

The protein belongs to the purine/pyrimidine phosphoribosyltransferase family. As to quaternary structure, homotetramer. Mg(2+) is required as a cofactor.

It localises to the cytoplasm. The enzyme catalyses IMP + diphosphate = hypoxanthine + 5-phospho-alpha-D-ribose 1-diphosphate. It catalyses the reaction GMP + diphosphate = guanine + 5-phospho-alpha-D-ribose 1-diphosphate. It functions in the pathway purine metabolism; IMP biosynthesis via salvage pathway; IMP from hypoxanthine: step 1/1. Functionally, converts guanine to guanosine monophosphate, and hypoxanthine to inosine monophosphate. Transfers the 5-phosphoribosyl group from 5-phosphoribosylpyrophosphate onto the purine. Plays a central role in the generation of purine nucleotides through the purine salvage pathway. The polypeptide is Hypoxanthine-guanine phosphoribosyltransferase (HPRT1) (Sus scrofa (Pig)).